A 594-amino-acid chain; its full sequence is Dictomallein-4 (594 aa).

The signal sequence occupies residues 1–18 (MKLVLIFLIINFLLIINC). One can recognise a Peptidase M66 domain in the interval 147-408 (PDVSQDYTLK…QNYFKNSIYY (262 aa)). Residue H300 coordinates Zn(2+). E301 is an active-site residue. Residues H304 and H310 each coordinate Zn(2+).

The protein belongs to the dictomallein family. Requires Zn(2+) as cofactor.

It localises to the secreted. The protein is Dictomallein-4 (dtmlD) of Dictyostelium discoideum (Social amoeba).